We begin with the raw amino-acid sequence, 245 residues long: 1-(5-phosphoribosyl)-5-[(5-phosphoribosylamino)methylideneamino] imidazole-4-carboxamide isomerase (245 aa).

D7 serves as the catalytic Proton acceptor. The Proton donor role is filled by D129.

Belongs to the HisA/HisF family.

Its subcellular location is the cytoplasm. It catalyses the reaction 1-(5-phospho-beta-D-ribosyl)-5-[(5-phospho-beta-D-ribosylamino)methylideneamino]imidazole-4-carboxamide = 5-[(5-phospho-1-deoxy-D-ribulos-1-ylimino)methylamino]-1-(5-phospho-beta-D-ribosyl)imidazole-4-carboxamide. Its pathway is amino-acid biosynthesis; L-histidine biosynthesis; L-histidine from 5-phospho-alpha-D-ribose 1-diphosphate: step 4/9. The protein is 1-(5-phosphoribosyl)-5-[(5-phosphoribosylamino)methylideneamino] imidazole-4-carboxamide isomerase of Pectobacterium atrosepticum (strain SCRI 1043 / ATCC BAA-672) (Erwinia carotovora subsp. atroseptica).